The sequence spans 107 residues: 2Fe-2S ferredoxin CtmE (107 aa).

A 2Fe-2S ferredoxin-type domain is found at 3 to 106 (VKVTYVDSAN…GLVIHTLEPE (104 aa)). Residues C41, C47, C50, and C87 each contribute to the [2Fe-2S] cluster site.

Belongs to the adrenodoxin/putidaredoxin family. The cofactor is [2Fe-2S] cluster.

The protein operates within terpene metabolism; monoterpene degradation. Its function is as follows. Involved in the degradation of the cyclic monoterpene limonene. Probably part of an electron transfer system involved in the oxidation of limonene to perillyl alcohol. This Castellaniella defragrans (strain DSM 12143 / CCUG 39792 / 65Phen) (Alcaligenes defragrans) protein is 2Fe-2S ferredoxin CtmE.